The chain runs to 210 residues: Outer-membrane lipoprotein LolB (210 aa).

The signal sequence occupies residues 1–18 (MKKLTKLLSLTLLFALAG). Cysteine 19 carries N-palmitoyl cysteine lipidation. Cysteine 19 carries S-diacylglycerol cysteine lipidation.

Belongs to the LolB family. Monomer.

The protein localises to the cell outer membrane. Plays a critical role in the incorporation of lipoproteins in the outer membrane after they are released by the LolA protein. The sequence is that of Outer-membrane lipoprotein LolB from Glaesserella parasuis serovar 5 (strain SH0165) (Haemophilus parasuis).